Here is a 388-residue protein sequence, read N- to C-terminus: Succinyl-diaminopimelate desuccinylase (388 aa).

Residue His84 participates in Zn(2+) binding. Asp86 is an active-site residue. Asp115 contacts Zn(2+). Glu146 (proton acceptor) is an active-site residue. Zn(2+) contacts are provided by Glu147, Glu175, and His360.

Belongs to the peptidase M20A family. DapE subfamily. Homodimer. Zn(2+) serves as cofactor. Requires Co(2+) as cofactor.

The enzyme catalyses N-succinyl-(2S,6S)-2,6-diaminopimelate + H2O = (2S,6S)-2,6-diaminopimelate + succinate. Its pathway is amino-acid biosynthesis; L-lysine biosynthesis via DAP pathway; LL-2,6-diaminopimelate from (S)-tetrahydrodipicolinate (succinylase route): step 3/3. In terms of biological role, catalyzes the hydrolysis of N-succinyl-L,L-diaminopimelic acid (SDAP), forming succinate and LL-2,6-diaminopimelate (DAP), an intermediate involved in the bacterial biosynthesis of lysine and meso-diaminopimelic acid, an essential component of bacterial cell walls. This is Succinyl-diaminopimelate desuccinylase from Helicobacter pylori (strain G27).